The primary structure comprises 292 residues: Probable ABC transporter permease protein YurN (292 aa).

The next 6 membrane-spanning stretches (helical) occupy residues 7–27 (IIPY…YIPI), 70–90 (VLYA…LAAV), 106–126 (VFFL…DFIY), 160–180 (VIFV…IVSI), 215–235 (FVAV…PYIL), and 260–280 (MMGY…ALSL). An ABC transmembrane type-1 domain is found at 66-282 (LTNNVLYAVI…IITLALSLMQ (217 aa)).

The protein belongs to the binding-protein-dependent transport system permease family. MalFG subfamily.

Its subcellular location is the cell membrane. Probably part of the binding-protein-dependent transport system YurMNO. Probably responsible for the translocation of the substrate across the membrane. This is Probable ABC transporter permease protein YurN (yurN) from Bacillus subtilis (strain 168).